The following is a 336-amino-acid chain: Protein-arginine kinase (336 aa).

The Phosphagen kinase C-terminal domain maps to 22-245 (IVMSSRIRLA…QQIINEEMQI (224 aa)). Residues 25–29 (SSRIR), histidine 83, arginine 116, 167–171 (RASVM), and 198–203 (RGIYGE) each bind ATP.

It belongs to the ATP:guanido phosphotransferase family.

The enzyme catalyses L-arginyl-[protein] + ATP = N(omega)-phospho-L-arginyl-[protein] + ADP + H(+). Its function is as follows. Catalyzes the specific phosphorylation of arginine residues in proteins. The polypeptide is Protein-arginine kinase (Staphylococcus saprophyticus subsp. saprophyticus (strain ATCC 15305 / DSM 20229 / NCIMB 8711 / NCTC 7292 / S-41)).